The sequence spans 626 residues: Phosphomethylpyrimidine synthase (626 aa).

The span at 92 to 106 (AREVKPEDNGLKGPD) shows a compositional bias: basic and acidic residues. A disordered region spans residues 92 to 117 (AREVKPEDNGLKGPDRSAGVPPFPNV). Substrate-binding positions include Asn-219, Met-248, Tyr-277, His-313, 333–335 (SRG), 374–377 (DGLR), and Glu-413. His-417 contributes to the Zn(2+) binding site. Residue Tyr-440 coordinates substrate. His-481 contributes to the Zn(2+) binding site. Cys-561, Cys-564, and Cys-569 together coordinate [4Fe-4S] cluster.

The protein belongs to the ThiC family. Homodimer. Requires [4Fe-4S] cluster as cofactor.

It carries out the reaction 5-amino-1-(5-phospho-beta-D-ribosyl)imidazole + S-adenosyl-L-methionine = 4-amino-2-methyl-5-(phosphooxymethyl)pyrimidine + CO + 5'-deoxyadenosine + formate + L-methionine + 3 H(+). It participates in cofactor biosynthesis; thiamine diphosphate biosynthesis. Functionally, catalyzes the synthesis of the hydroxymethylpyrimidine phosphate (HMP-P) moiety of thiamine from aminoimidazole ribotide (AIR) in a radical S-adenosyl-L-methionine (SAM)-dependent reaction. This is Phosphomethylpyrimidine synthase from Novosphingobium aromaticivorans (strain ATCC 700278 / DSM 12444 / CCUG 56034 / CIP 105152 / NBRC 16084 / F199).